Here is a 200-residue protein sequence, read N- to C-terminus: Large ribosomal subunit protein uL4 (200 aa).

The segment at 42 to 65 (TRAQKTRSDVSGGGAKPWRQKGTG) is disordered.

The protein belongs to the universal ribosomal protein uL4 family. In terms of assembly, part of the 50S ribosomal subunit.

In terms of biological role, one of the primary rRNA binding proteins, this protein initially binds near the 5'-end of the 23S rRNA. It is important during the early stages of 50S assembly. It makes multiple contacts with different domains of the 23S rRNA in the assembled 50S subunit and ribosome. Its function is as follows. Forms part of the polypeptide exit tunnel. This is Large ribosomal subunit protein uL4 from Photobacterium profundum (strain SS9).